We begin with the raw amino-acid sequence, 179 residues long: Large ribosomal subunit protein uL5 (179 aa).

This sequence belongs to the universal ribosomal protein uL5 family. As to quaternary structure, part of the 50S ribosomal subunit; part of the 5S rRNA/L5/L18/L25 subcomplex. Contacts the 5S rRNA and the P site tRNA. Forms a bridge to the 30S subunit in the 70S ribosome.

This is one of the proteins that bind and probably mediate the attachment of the 5S RNA into the large ribosomal subunit, where it forms part of the central protuberance. In the 70S ribosome it contacts protein S13 of the 30S subunit (bridge B1b), connecting the 2 subunits; this bridge is implicated in subunit movement. Contacts the P site tRNA; the 5S rRNA and some of its associated proteins might help stabilize positioning of ribosome-bound tRNAs. In Parasynechococcus marenigrum (strain WH8102), this protein is Large ribosomal subunit protein uL5.